A 220-amino-acid chain; its full sequence is Ribosomal RNA large subunit methyltransferase E (220 aa).

S-adenosyl-L-methionine is bound by residues glycine 60, tryptophan 62, aspartate 92, aspartate 108, and aspartate 133. The active-site Proton acceptor is lysine 173. Residues 197 to 220 (RKPKASRDKSSETFILGRQLKQPR) are disordered.

Belongs to the class I-like SAM-binding methyltransferase superfamily. RNA methyltransferase RlmE family.

The protein resides in the cytoplasm. The enzyme catalyses uridine(2552) in 23S rRNA + S-adenosyl-L-methionine = 2'-O-methyluridine(2552) in 23S rRNA + S-adenosyl-L-homocysteine + H(+). Functionally, specifically methylates the uridine in position 2552 of 23S rRNA at the 2'-O position of the ribose in the fully assembled 50S ribosomal subunit. The protein is Ribosomal RNA large subunit methyltransferase E of Burkholderia ambifaria (strain ATCC BAA-244 / DSM 16087 / CCUG 44356 / LMG 19182 / AMMD) (Burkholderia cepacia (strain AMMD)).